A 351-amino-acid polypeptide reads, in one-letter code: UDP-3-O-acylglucosamine N-acyltransferase (351 aa).

Residue H257 is the Proton acceptor of the active site.

This sequence belongs to the transferase hexapeptide repeat family. LpxD subfamily. As to quaternary structure, homotrimer.

It carries out the reaction a UDP-3-O-[(3R)-3-hydroxyacyl]-alpha-D-glucosamine + a (3R)-hydroxyacyl-[ACP] = a UDP-2-N,3-O-bis[(3R)-3-hydroxyacyl]-alpha-D-glucosamine + holo-[ACP] + H(+). Its pathway is bacterial outer membrane biogenesis; LPS lipid A biosynthesis. Functionally, catalyzes the N-acylation of UDP-3-O-acylglucosamine using 3-hydroxyacyl-ACP as the acyl donor. Is involved in the biosynthesis of lipid A, a phosphorylated glycolipid that anchors the lipopolysaccharide to the outer membrane of the cell. This is UDP-3-O-acylglucosamine N-acyltransferase from Methylorubrum populi (strain ATCC BAA-705 / NCIMB 13946 / BJ001) (Methylobacterium populi).